The chain runs to 164 residues: UPF0305 protein MTH_812 (164 aa).

It belongs to the UPF0305 family.

The sequence is that of UPF0305 protein MTH_812 from Methanothermobacter thermautotrophicus (strain ATCC 29096 / DSM 1053 / JCM 10044 / NBRC 100330 / Delta H) (Methanobacterium thermoautotrophicum).